The following is a 53-amino-acid chain: uncharacterized protein (53 aa).

Positions 1 to 19 are cleaved as a signal peptide; the sequence is MKLLTILILFYSFFMNLQA.

This is an uncharacterized protein from Autographa californica nuclear polyhedrosis virus (AcMNPV).